The sequence spans 215 residues: Cytochrome b-c1 complex subunit Rieske, mitochondrial (215 aa).

The N-terminal 22 residues, 1–22 (MLGIRSSVKTCFKPMSLTSKRL), are a transit peptide targeting the mitochondrion. Positions 23 to 30 (ISQSLLAS) are cleaved as a propeptide — removed in mature form. The Mitochondrial matrix segment spans residues 31–50 (KSTYRTPNFDDVLKENNDAD). A helical transmembrane segment spans residues 51 to 80 (KGRSYAYFMVGAMGLLSSAGAKSTVETFIS). The Mitochondrial intermembrane segment spans residues 81–215 (SMTATADVLA…EFDGDKVIVG (135 aa)). The segment at 90 to 93 (AMAK) is hinge. Positions 123-214 (PHEIQEANSV…YEFDGDKVIV (92 aa)) constitute a Rieske domain. Cys-159, His-161, Cys-178, and His-181 together coordinate [2Fe-2S] cluster. A disulfide bond links Cys-164 and Cys-180.

It belongs to the Rieske iron-sulfur protein family. In terms of assembly, component of the ubiquinol-cytochrome c oxidoreductase (cytochrome b-c1 complex, complex III, CIII), a multisubunit enzyme composed of 10 subunits. The complex is composed of 3 respiratory subunits cytochrome b (COB), cytochrome c1 (CYT1) and Rieske protein (RIP1), 2 core protein subunits COR1 and QCR2, and 5 low-molecular weight protein subunits QCR6, QCR7, QCR8, QCR9 and QCR10. The complex exists as an obligatory dimer and forms supercomplexes (SCs) in the inner mitochondrial membrane with a monomer or a dimer of cytochrome c oxidase (complex IV, CIV), resulting in 2 different assemblies (supercomplexes III(2)IV and III(2)IV(2)). RIP1 interacts with QCR10 on the intermembrane space (IMS) side, and with QCR9. The cofactor is [2Fe-2S] cluster. Post-translationally, processed by both the mitochondrial processing peptidase (MPP) and the mitochondrial intermediate protease (MIP). Initially, MPP removes 22 amino acids from the newly imported precursor in the mitochondrial matrix. This proteolytic processing is then followed by a second proteolytic cleavage by MIP, which removes an octapeptide to generate mature-sized RIP1.

The protein resides in the mitochondrion inner membrane. It carries out the reaction a quinol + 2 Fe(III)-[cytochrome c](out) = a quinone + 2 Fe(II)-[cytochrome c](out) + 2 H(+)(out). Its function is as follows. Component of the ubiquinol-cytochrome c oxidoreductase, a multisubunit transmembrane complex that is part of the mitochondrial electron transport chain which drives oxidative phosphorylation. The respiratory chain contains 3 multisubunit complexes succinate dehydrogenase (complex II, CII), ubiquinol-cytochrome c oxidoreductase (cytochrome b-c1 complex, complex III, CIII) and cytochrome c oxidase (complex IV, CIV), that cooperate to transfer electrons derived from NADH and succinate to molecular oxygen, creating an electrochemical gradient over the inner membrane that drives transmembrane transport and the ATP synthase. The cytochrome b-c1 complex catalyzes electron transfer from ubiquinol to cytochrome c, linking this redox reaction to translocation of protons across the mitochondrial inner membrane, with protons being carried across the membrane as hydrogens on the quinol. In the process called Q cycle, 2 protons are consumed from the matrix, 4 protons are released into the intermembrane space and 2 electrons are passed to cytochrome c. The Rieske protein is a catalytic core subunit containing a [2Fe-2S] iron-sulfur cluster. It cycles between 2 conformational states during catalysis to transfer electrons from the quinol bound in the Q(0) site in cytochrome b (COB) to cytochrome c1 (CYT1). This is Cytochrome b-c1 complex subunit Rieske, mitochondrial (RIP1) from Saccharomyces cerevisiae (strain ATCC 204508 / S288c) (Baker's yeast).